The following is a 295-amino-acid chain: uncharacterized protein (295 aa).

NAD(+) contacts are provided by residues 11 to 25 and T101; that span reads GYIG…MAKR. Residue K176 is part of the active site. K252 serves as a coordination point for NAD(+).

This sequence belongs to the HIBADH-related family.

This is an uncharacterized protein from Mycobacterium tuberculosis (strain CDC 1551 / Oshkosh).